Consider the following 648-residue polypeptide: Zinc finger protein 202 (648 aa).

K22 participates in a covalent cross-link: Glycyl lysine isopeptide (Lys-Gly) (interchain with G-Cter in SUMO2). An SCAN box domain is found at 46–127; the sequence is HQNFRRFRYQ…VTLVEGLQKQ (82 aa). Residues 146–221 are disordered; sequence SEETVHLGVE…PDLPAERSSG (76 aa). Residues 165 to 182 are compositionally biased toward polar residues; that stretch reads PVQSSTPEQSPEETTQSP. The 72-residue stretch at 237 to 308 folds into the KRAB domain; it reads VTFKDVAVCF…DIQEPQETQE (72 aa). 2 C2H2-type zinc fingers span residues 397-419 and 425-447; these read HDCSVCGKSFTCNSHLVRHLRTH and YKCMECGKSYTRSSHLARHQKVH. Glycyl lysine isopeptide (Lys-Gly) (interchain with G-Cter in SUMO2) cross-links involve residues K454 and K460. Residue S466 is modified to Phosphoserine. The C2H2-type 3 zinc finger occupies 481-503; it reads YRCDDCGKHFRWTSDLVRHQRTH. Glycyl lysine isopeptide (Lys-Gly) (interchain with G-Cter in SUMO2) cross-links involve residues K507 and K521. C2H2-type zinc fingers lie at residues 509–531, 537–559, 565–587, 593–615, and 621–643; these read FFCTICGKSFSQKSVLTTHQRIH, YLCGECGEDFSEHRRYLAHRKTH, YLCSECGRCFTHSAAFAKHLRGH, CRCNECGKSFSRRDHLVRHQRTH, and FTCPTCGKSFSRGYHLIRHQRTH.

Interacts with SDP1. In terms of tissue distribution, highly expressed in testis. Also expressed in breast carcinoma cell lines.

The protein localises to the nucleus. Transcriptional repressor that binds to elements found predominantly in genes that participate in lipid metabolism. Among its targets are structural components of lipoprotein particles (apolipoproteins AIV, CIII, and E), enzymes involved in lipid processing (lipoprotein lipase, lecithin cholesteryl ester transferase), transporters involved in lipid homeostasis (ABCA1, ABCG1), and several genes involved in processes related to energy metabolism and vascular disease. This chain is Zinc finger protein 202 (ZNF202), found in Homo sapiens (Human).